The chain runs to 643 residues: Capsid scaffolding protein (643 aa).

Positions 1 to 15 (MSSPSPSSSSSDHPS) are enriched in low complexity. Residues 1–31 (MSSPSPSSSSSDHPSSPAPVPAPPGPVPEAA) form a disordered region. The segment covering 16 to 27 (SPAPVPAPPGPV) has biased composition (pro residues). Catalysis depends on charge relay system residues histidine 82, serine 151, and histidine 173. The disordered stretch occupies residues 283–306 (SARGGEDPPTAAIATTPHPATDAT). Positions 290–306 (PPTAAIATTPHPATDAT) are enriched in low complexity. The segment at 324–343 (EDLISVPRSTFMTMLQTNLD) is interaction with pAP. A Nuclear localization signal motif is present at residues 439 to 445 (RPGKRKR). 2 disordered regions span residues 485–519 (QQFPQPLPQPQLQPQAQPQPQPAPQLYPAPPQAFY) and 544–625 (CAPG…STKP). Pro residues predominate over residues 489–515 (QPLPQPQLQPQAQPQPQPAPQLYPAPP). A compositionally biased stretch (low complexity) spans 607 to 616 (PQQQQQPQQQ). Residues 623-643 (TKPSQISQLQKIFCEELLNKT) form an interaction with major capsid protein region.

This sequence belongs to the herpesviridae capsid scaffolding protein family. In terms of assembly, homomultimer. Interacts with major capsid protein. As to quaternary structure, exists in a monomer-dimer equilibrium with the dimer being the active species. Post-translationally, capsid scaffolding protein is cleaved by assemblin after formation of the spherical procapsid. As a result, the capsid obtains its mature, icosahedral shape. Cleavages occur at two or more sites: release (R-site) and maturation (M-site).

It localises to the host cytoplasm. The protein resides in the host nucleus. The enzyme catalyses Cleaves -Ala-|-Ser- and -Ala-|-Ala- bonds in the scaffold protein.. Its function is as follows. Acts as a scaffold protein by binding major capsid protein in the cytoplasm, inducing the nuclear localization of both proteins. Multimerizes in the nucleus such as major capsid protein forms the icosahedral T=16 capsid. Autocatalytic cleavage releases the assembly protein, and subsequently abolishes interaction with major capsid protein. Cleavages products are evicted from the capsid before or during DNA packaging. In terms of biological role, protease that plays an essential role in virion assembly within the nucleus. Catalyzes the cleavage of the assembly protein after formation of the spherical procapsid. By that cleavage, the capsid matures and gains its icosahedral shape. The cleavage sites seem to include -Ala-Ser-, -Ala-Ala-, as well as Ala-Thr bonds. Assemblin and cleavages products are evicted from the capsid before or during DNA packaging. Plays a major role in capsid assembly. Acts as a scaffold protein by binding major capsid protein. Multimerizes in the nucleus such as major capsid protein forms the icosahedral T=16 capsid. Cleaved by assemblin after capsid completion. The cleavages products are evicted from the capsid before or during DNA packaging. The protein is Capsid scaffolding protein of Equine herpesvirus 2 (strain 86/87) (EHV-2).